Consider the following 536-residue polypeptide: Potassium voltage-gated channel protein shk-1 (536 aa).

Disordered regions lie at residues M1–K31 and A87–T131. The Cytoplasmic portion of the chain corresponds to M1–R275. Polar residues predominate over residues Q116–T131. A helical membrane pass occupies residues I276–T296. At V297–H322 the chain is on the extracellular side. Residues Y323 to L343 form a helical membrane-spanning segment. Residues R344 to T356 are Cytoplasmic-facing. Residues S357–A377 form a helical membrane-spanning segment. Residues D378–E425 are Extracellular-facing. Residues F426 to F446 form a helical; Voltage-sensor membrane-spanning segment. Topologically, residues A447–S458 are cytoplasmic. Residues I459–V479 form a helical membrane-spanning segment. At P480–K486 the chain is on the extracellular side. The chain crosses the membrane as a helical span at residues V487–I507. Topologically, residues V508–A536 are cytoplasmic.

This sequence belongs to the potassium channel family. A (Shaker) (TC 1.A.1.2) subfamily. Shaker sub-subfamily. In terms of tissue distribution, expressed in a variety of interneurons and sensory neurons, as well as body wall muscle.

It is found in the membrane. Mediates the voltage-dependent potassium ion permeability of excitable membranes. Has an important role in repolarization and in regulating the pattern of action potential firing. Isoform a expresses currents in a more depolarized voltage range than isoform d. The polypeptide is Potassium voltage-gated channel protein shk-1 (Caenorhabditis elegans).